The primary structure comprises 546 residues: Chaperonin GroEL 1 (546 aa).

Residues 30–33 (TLGP), lysine 51, 87–91 (DGTTT), glycine 415, 479–481 (NAA), and aspartate 495 contribute to the ATP site. The interval 526–546 (KEDAPMPGGMPGGMGGMGMDM) is disordered. Residues 534–546 (GMPGGMGGMGMDM) show a composition bias toward gly residues.

This sequence belongs to the chaperonin (HSP60) family. In terms of assembly, forms a cylinder of 14 subunits composed of two heptameric rings stacked back-to-back. Interacts with the co-chaperonin GroES.

The protein resides in the cytoplasm. The catalysed reaction is ATP + H2O + a folded polypeptide = ADP + phosphate + an unfolded polypeptide.. In terms of biological role, together with its co-chaperonin GroES, plays an essential role in assisting protein folding. The GroEL-GroES system forms a nano-cage that allows encapsulation of the non-native substrate proteins and provides a physical environment optimized to promote and accelerate protein folding. The chain is Chaperonin GroEL 1 from Burkholderia vietnamiensis (strain G4 / LMG 22486) (Burkholderia cepacia (strain R1808)).